The chain runs to 116 residues: Putative membrane protein (116 aa).

The helical transmembrane segment at 13 to 33 (VISIITFILVIAIFVIEIVSC) threads the bilayer.

It localises to the host membrane. This chain is Putative membrane protein, found in Alethinophid 1 reptarenavirus (isolate AlRrV1/Boa/USA/BC/2009) (Golden Gate virus).